The sequence spans 201 residues: Recombination protein RecR (201 aa).

The C4-type zinc finger occupies Cys57 to Cys72. One can recognise a Toprim domain in the interval Gly81–Pro176.

This sequence belongs to the RecR family.

Its function is as follows. May play a role in DNA repair. It seems to be involved in an RecBC-independent recombinational process of DNA repair. It may act with RecF and RecO. In Pectobacterium atrosepticum (strain SCRI 1043 / ATCC BAA-672) (Erwinia carotovora subsp. atroseptica), this protein is Recombination protein RecR.